Here is a 968-residue protein sequence, read N- to C-terminus: Alanine--tRNA ligase, cytoplasmic (968 aa).

An N-acetylmethionine modification is found at methionine 1. Residues serine 3 and serine 8 each carry the phosphoserine modification. Lysine 19 bears the N6-acetyllysine mark. Residues arginine 77, histidine 95, tryptophan 176, and isoleucine 214–asparagine 216 contribute to the ATP site. The L-alanine site is built by asparagine 216 and aspartate 239. Residue glycine 243 coordinates ATP. Residues serine 399 and serine 555 each carry the phosphoserine modification. Histidine 605, histidine 609, cysteine 723, and histidine 727 together coordinate Zn(2+). Residues arginine 750–alanine 763 carry the Nuclear localization signal motif. Lysine 876 is modified (N6-acetyllysine). An N6,N6,N6-trimethyllysine; alternate modification is found at lysine 943. Lysine 943 carries the N6,N6-dimethyllysine; alternate modification. Lysine 943 carries the N6-methyllysine; alternate modification.

This sequence belongs to the class-II aminoacyl-tRNA synthetase family. As to quaternary structure, monomer. Interacts with ANKRD16; the interaction is direct. Zn(2+) serves as cofactor. ISGylated. Post-translationally, methylation at 'Lys-943' by METTL21C.

The protein resides in the cytoplasm. Its subcellular location is the nucleus. It carries out the reaction tRNA(Ala) + L-alanine + ATP = L-alanyl-tRNA(Ala) + AMP + diphosphate. It catalyses the reaction (S)-lactate + ATP + H(+) = (S)-lactoyl-AMP + diphosphate. The catalysed reaction is (S)-lactoyl-AMP + L-lysyl-[protein] = N(6)-[(S)-lactoyl]-L-lysyl-[protein] + AMP + 2 H(+). With respect to regulation, the protein lactyltransferase activity is inhibited by beta-alanine. Functionally, catalyzes the attachment of alanine to tRNA(Ala) in a two-step reaction: alanine is first activated by ATP to form Ala-AMP and then transferred to the acceptor end of tRNA(Ala). Also edits incorrectly charged tRNA(Ala) via its editing domain. In presence of high levels of lactate, also acts as a protein lactyltransferase that mediates lactylation of lysine residues in target proteins, such as TEAD1, TP53/p53 and YAP1. Protein lactylation takes place in a two-step reaction: lactate is first activated by ATP to form lactate-AMP and then transferred to lysine residues of target proteins. Acts as an inhibitor of TP53/p53 activity by catalyzing lactylation of TP53/p53. Acts as a positive regulator of the Hippo pathway by mediating lactylation of TEAD1 and YAP1. In Pongo abelii (Sumatran orangutan), this protein is Alanine--tRNA ligase, cytoplasmic (AARS1).